Here is a 475-residue protein sequence, read N- to C-terminus: Ribulose bisphosphate carboxylase large chain (475 aa).

The propeptide occupies 1–2; it reads MS. Position 3 is an N-acetylproline (P3). K14 is modified (N6,N6,N6-trimethyllysine). Substrate contacts are provided by N123 and T173. K175 serves as the catalytic Proton acceptor. K177 serves as a coordination point for substrate. K201, D203, and E204 together coordinate Mg(2+). K201 carries the post-translational modification N6-carboxylysine. Residue H294 is the Proton acceptor of the active site. R295, H327, and S379 together coordinate substrate.

The protein belongs to the RuBisCO large chain family. Type I subfamily. In terms of assembly, heterohexadecamer of 8 large chains and 8 small chains; disulfide-linked. The disulfide link is formed within the large subunit homodimers. Requires Mg(2+) as cofactor. In terms of processing, the disulfide bond which can form in the large chain dimeric partners within the hexadecamer appears to be associated with oxidative stress and protein turnover.

It localises to the plastid. Its subcellular location is the chloroplast. The catalysed reaction is 2 (2R)-3-phosphoglycerate + 2 H(+) = D-ribulose 1,5-bisphosphate + CO2 + H2O. It catalyses the reaction D-ribulose 1,5-bisphosphate + O2 = 2-phosphoglycolate + (2R)-3-phosphoglycerate + 2 H(+). Functionally, ruBisCO catalyzes two reactions: the carboxylation of D-ribulose 1,5-bisphosphate, the primary event in carbon dioxide fixation, as well as the oxidative fragmentation of the pentose substrate in the photorespiration process. Both reactions occur simultaneously and in competition at the same active site. The sequence is that of Ribulose bisphosphate carboxylase large chain from Spirogyra maxima (Green alga).